The primary structure comprises 491 residues: Cobyric acid synthase (491 aa).

Positions 258-445 (ALKVAVPVLG…MHGLFGADAF (188 aa)) constitute a GATase cobBQ-type domain. Residue Cys340 is the Nucleophile of the active site. His437 is a catalytic residue.

The protein belongs to the CobB/CobQ family. CobQ subfamily.

It functions in the pathway cofactor biosynthesis; adenosylcobalamin biosynthesis. Catalyzes amidations at positions B, D, E, and G on adenosylcobyrinic A,C-diamide. NH(2) groups are provided by glutamine, and one molecule of ATP is hydrogenolyzed for each amidation. The polypeptide is Cobyric acid synthase (Mesorhizobium japonicum (strain LMG 29417 / CECT 9101 / MAFF 303099) (Mesorhizobium loti (strain MAFF 303099))).